Here is a 304-residue protein sequence, read N- to C-terminus: Cell division protein ZipA (304 aa).

Over 1 to 5 the chain is Periplasmic; it reads MQDLR. A helical transmembrane segment spans residues 6 to 26; it reads LILIVVGAIAIIALLLHGLWT. Topologically, residues 27–304 are cytoplasmic; that stretch reads SRKERSSVFR…IRDVIDANSH (278 aa). The segment at 31 to 165 is disordered; the sequence is RSSVFRDRPH…PEPQSQPKQK (135 aa). The segment covering 121–132 has biased composition (basic and acidic residues); it reads ARPETHKPDQPE. The span at 137–158 shows a compositional bias: low complexity; the sequence is AAPAAAETAPAPAEPAQKTPEP.

It belongs to the ZipA family. As to quaternary structure, interacts with FtsZ via their C-terminal domains.

The protein localises to the cell inner membrane. Functionally, essential cell division protein that stabilizes the FtsZ protofilaments by cross-linking them and that serves as a cytoplasmic membrane anchor for the Z ring. Also required for the recruitment to the septal ring of downstream cell division proteins. This Erwinia tasmaniensis (strain DSM 17950 / CFBP 7177 / CIP 109463 / NCPPB 4357 / Et1/99) protein is Cell division protein ZipA.